A 348-amino-acid chain; its full sequence is GTPase Obg 1 (348 aa).

The Obg domain maps to 1–159 (MSFVDEAKIH…HCVLLKLKIV (159 aa)). Residues 160-329 (SDVGIIGMPN…LHAQVKKAVV (170 aa)) form the OBG-type G domain. Residues 166-173 (GMPNAGKS), 191-195 (FTTLE), 212-215 (DIPG), 279-282 (NKCD), and 310-312 (GDE) each bind GTP. Ser-173 and Thr-193 together coordinate Mg(2+).

Belongs to the TRAFAC class OBG-HflX-like GTPase superfamily. OBG GTPase family. As to quaternary structure, monomer. It depends on Mg(2+) as a cofactor.

Its subcellular location is the cytoplasm. An essential GTPase which binds GTP, GDP and possibly (p)ppGpp with moderate affinity, with high nucleotide exchange rates and a fairly low GTP hydrolysis rate. Plays a role in control of the cell cycle, stress response, ribosome biogenesis and in those bacteria that undergo differentiation, in morphogenesis control. This Anaplasma marginale (strain St. Maries) protein is GTPase Obg 1.